The primary structure comprises 404 residues: Serine/threonine transporter SstT (404 aa).

8 consecutive transmembrane segments (helical) span residues 10-30 (ILGGNLVLRIAVGLVLGICLA), 53-73 (AIAPILVFVLVMASIANKEVG), 81-101 (ILVMYVLGTFVAAVTAVILSY), 140-160 (AITNGNFIGILAWSIGLGIAL), 177-197 (AVSFVVKVVIAFAPIGVFGLV), 215-235 (LLAVLLGAMAIVAFILNPLLV), 287-307 (IAIPLGANINMAGAAITITVL), and 329-349 (IVASICACGASGVAGGSLLLI).

It belongs to the dicarboxylate/amino acid:cation symporter (DAACS) (TC 2.A.23) family.

Its subcellular location is the cell inner membrane. The catalysed reaction is L-serine(in) + Na(+)(in) = L-serine(out) + Na(+)(out). It carries out the reaction L-threonine(in) + Na(+)(in) = L-threonine(out) + Na(+)(out). Its function is as follows. Involved in the import of serine and threonine into the cell, with the concomitant import of sodium (symport system). The polypeptide is Serine/threonine transporter SstT (Glaesserella parasuis serovar 5 (strain SH0165) (Haemophilus parasuis)).